The sequence spans 81 residues: Photosystem I iron-sulfur center (81 aa).

4Fe-4S ferredoxin-type domains follow at residues 2–31 (AHSVKIYDTCIGCTQCVRACPTDVLEMVPW) and 39–68 (IASAPRTEDCVGCKRCESACPTDYLSVRVY). [4Fe-4S] cluster contacts are provided by Cys-11, Cys-14, Cys-17, Cys-21, Cys-48, Cys-51, Cys-54, and Cys-58.

In terms of assembly, the eukaryotic PSI reaction center is composed of at least 11 subunits. The cofactor is [4Fe-4S] cluster.

The protein localises to the plastid. It is found in the chloroplast thylakoid membrane. The catalysed reaction is reduced [plastocyanin] + hnu + oxidized [2Fe-2S]-[ferredoxin] = oxidized [plastocyanin] + reduced [2Fe-2S]-[ferredoxin]. Functionally, apoprotein for the two 4Fe-4S centers FA and FB of photosystem I (PSI); essential for photochemical activity. FB is the terminal electron acceptor of PSI, donating electrons to ferredoxin. The C-terminus interacts with PsaA/B/D and helps assemble the protein into the PSI complex. Required for binding of PsaD and PsaE to PSI. PSI is a plastocyanin-ferredoxin oxidoreductase, converting photonic excitation into a charge separation, which transfers an electron from the donor P700 chlorophyll pair to the spectroscopically characterized acceptors A0, A1, FX, FA and FB in turn. The polypeptide is Photosystem I iron-sulfur center (Gnetum gnemon (Spanish joint-fir)).